A 142-amino-acid polypeptide reads, in one-letter code: uncharacterized protein (142 aa).

This is an uncharacterized protein from Bacillus anthracis.